Here is a 589-residue protein sequence, read N- to C-terminus: NADPH-dependent diflavin oxidoreductase 1 (589 aa).

Residues 5-151 (ITILYGSETG…YYIEWEAELI (147 aa)) enclose the Flavodoxin-like domain. Residues 11–16 (SETGNA), 60–63 (STTG), 98–107 (VGDSSYVKYN), and Glu133 each bind FMN. An FAD-binding FR-type domain is found at 202-439 (DGLKLGTVLE…SIQRSSFKYK (238 aa)). FAD contacts are provided by residues Arg349, 380 to 383 (RMFS), and 412 to 415 (GVCT). NADP(+)-binding positions include Thr452 and 507–508 (SR). Trp589 is an FAD binding site.

It belongs to the NADPH-dependent diflavin oxidoreductase NDOR1 family. This sequence in the N-terminal section; belongs to the flavodoxin family. In the C-terminal section; belongs to the flavoprotein pyridine nucleotide cytochrome reductase family. In terms of assembly, interacts with DRE2; as part of the cytosolic iron-sulfur (Fe-S) protein assembly (CIA) machinery. The cofactor is FAD. FMN serves as cofactor.

The protein resides in the cytoplasm. The protein localises to the mitochondrion. The catalysed reaction is 2 oxidized [2Fe-2S]-[protein] + NADPH = 2 reduced [2Fe-2S]-[protein] + NADP(+) + H(+). Its function is as follows. NADPH-dependent reductase which is a central component of the cytosolic iron-sulfur (Fe-S) protein assembly (CIA) machinery. Transfers electrons from NADPH via its FAD and FMN prosthetic groups to the [2Fe-2S] cluster of DRE2, another key component of the CIA machinery. In turn, this reduced cluster provides electrons for assembly of cytosolic iron-sulfur cluster proteins. Positively controls H(2)O(2)-induced cell death. In Candida albicans (strain SC5314 / ATCC MYA-2876) (Yeast), this protein is NADPH-dependent diflavin oxidoreductase 1.